The sequence spans 105 residues: Putative RNA-binding protein RbpF (105 aa).

An RRM domain is found at 2–79; it reads SIYVGNLSYE…RDLKVNKAKP (78 aa). Basic and acidic residues predominate over residues 75 to 84; the sequence is NKAKPKEDRG. Residues 75–105 are disordered; that stretch reads NKAKPKEDRGSFGGGNRGGYGGGGGGGRSRY. Residues 85 to 105 show a composition bias toward gly residues; it reads SFGGGNRGGYGGGGGGGRSRY.

The protein is Putative RNA-binding protein RbpF (rbpF) of Nostoc sp. (strain PCC 7120 / SAG 25.82 / UTEX 2576).